The primary structure comprises 381 residues: Ceramide-binding protein svf-1 (381 aa).

The peripherally associates with membranes stretch occupies residues 1 to 18 (MFKWAQAALANVAGTKEP).

It belongs to the SVF1 family.

It is found in the golgi apparatus. It localises to the cis-Golgi network membrane. Its subcellular location is the endoplasmic reticulum membrane. The protein resides in the cytoplasm. The protein localises to the nucleus. Its function is as follows. Ceramide-binding protein that may transfer ceramides from the endoplasmic reticulum membrane to the cis-Golgi network membrane, and is thereby required for the biosynthesis of complex sphingolipids. The polypeptide is Ceramide-binding protein svf-1 (svf-1) (Neurospora crassa (strain ATCC 24698 / 74-OR23-1A / CBS 708.71 / DSM 1257 / FGSC 987)).